A 210-amino-acid polypeptide reads, in one-letter code: Tissue inhibitor of metalloproteinase (210 aa).

The N-terminal stretch at 1–27 (MDLRKHLGLLTLLLVAVFAFYGRPADA) is a signal peptide. A Zn(2+)-binding site is contributed by cysteine 28. Involved in metalloproteinase-binding stretches follow at residues 28–31 (CSCM) and 93–94 (DA). 5 disulfide bridges follow: cysteine 28–cysteine 96, cysteine 30–cysteine 118, cysteine 145–cysteine 195, cysteine 150–cysteine 155, and cysteine 165–cysteine 180. The NTR domain occupies 28 to 145 (CSCMPSHPQT…SGGYAKATNC (118 aa)).

It belongs to the protease inhibitor I35 (TIMP) family. In terms of tissue distribution, expressed in heads of female and male adult flies. Expressed at the time of eclosion in unopened wings of adult flies. Strongly expressed at the tip of ovarian germarium region 1 where germline stem cells (GSCs) and cystoblasts reside and in region 2 of the germarium.

The protein resides in the secreted. Functionally, metalloproteinase inhibitor that acts on both matrix metalloproteinases Mmp1 and Mmp2 in vitro. Complexes with metalloproteinases and irreversibly inactivates them by binding to their catalytic zinc cofactor. Required for wing maturation which is the final step in morphogenesis of the adult fly. Involved in the negative regulation of developmental tissue invasion for imaginal disk eversion during metamorphosis by inhibiting Mmp-mediated basement membrane (BM) degradation. Required for oogenesis and for the long-term maintainance of germarial structure and shape in the adult ovaries. Required for maintaining composition and biophysical properties of the extracellular matrix (ECM), and for the normal organization and cyst production of the germline stem cell (GSC) niche. The chain is Tissue inhibitor of metalloproteinase from Drosophila melanogaster (Fruit fly).